Here is an 826-residue protein sequence, read N- to C-terminus: Arsenite oxidase subunit AioA (826 aa).

Residues Cys22, Cys25, and Cys29 each contribute to the [3Fe-4S] cluster site. The substrate site is built by His196, Glu204, Arg420, and His424.

The protein belongs to the prokaryotic molybdopterin-containing oxidoreductase family. In terms of assembly, heterodimer consisting of a large and a small subunit. [3Fe-4S] cluster serves as cofactor. It depends on Mo-bis(molybdopterin guanine dinucleotide) as a cofactor.

The catalysed reaction is 2 oxidized [azurin] + arsenite + H2O = 2 reduced [azurin] + arsenate + 3 H(+). Its function is as follows. Involved in the detoxification of arsenic. Oxidizes As(III)O3(3-) (arsenite) to the somewhat less toxic As(V)O4(3-) (arsenate). In Alcaligenes faecalis, this protein is Arsenite oxidase subunit AioA (aioA).